We begin with the raw amino-acid sequence, 126 residues long: Large ribosomal subunit protein bL20c (126 aa).

This sequence belongs to the bacterial ribosomal protein bL20 family.

It is found in the plastid. The protein localises to the chloroplast. Functionally, binds directly to 23S ribosomal RNA and is necessary for the in vitro assembly process of the 50S ribosomal subunit. It is not involved in the protein synthesizing functions of that subunit. This Illicium oligandrum (Star anise) protein is Large ribosomal subunit protein bL20c.